We begin with the raw amino-acid sequence, 1025 residues long: MKFFALFIYRPVATILLSVAITLCGILGFRMLPVAPLPQVDFPVIMVSASLPGASPETMASSVATPLERSLGRIAGVSEMTSSSSLGSTRIILQFDFDRDINGAARDVQAAINAAQSLLPSGMPSRPTYRKANPSDAPIMILTLTSDTYSQGELYDFASTQLAPTISQIDGVGDVDVGGSSLPAVRVGLNPQALFNQGVSLDDVRTAISNANVRKPQGALEDGTHRWQIQTNDELKTAAEYQPLIIHYNNGGAVRLGDVATVTDSVQDVRNAGMTNAKPAILLMIRKLPEANIIQTVDSIRAKLPELQETIPAAIDLQIAQDRSPTIRASLEEVEQTLIISVALVILVVFLFLRSGRATIIPAVVVPVSLIGTFAAMYLCGFSLNNLSLMALTIATGFVVDDAIVVLENIARHLEAGMKPLQAALQGTREVGFTVLSMSLSLVAVFLPLLLMGGLPGRLLREFAVTLSVAIGISLLVSLTLTPMMCGWMLKASKPREQKRLRGFGRMLVALQQGYGKSLKWVLNHTRLVGVVLLGTIALNIWLYISIPKTFFPEQDTGVLMGGIQADQSISFQAMRGKLQDFMKIIRDDPAVDNVTGFTGGSRVNSGMMFITLKPRDERSETAQQIIDRLRVKLAKEPGANLFLMAVQDIRVGGRQSNASYQYTLLSDDLAALREWEPKIRKKLATLPELADVNSDQQDNGAEMNLVYDRDTMARLGIDVQAANSLLNNAFGQRQISTIYQPMNQYKVVMEVDPRYTQDISALEKMFVINNEGKAIPLSYFAKWQPANAPLSVNHQGLSAASTISFNLPTGKSLSDASAAIDRAMTQLGVPSTVRGSFAGTAQVFQETMNSQVILIIAAIATVYIVLGILYESYVHPLTILSTLPSAGVGALLALELFNAPFSLIALIGIMLLIGIVKKNAIMMVDFALEAQRHGNLTPQEAIFQACLLRFRPIMMTTLAALFGALPLVLSGGDGSELRQPLGITIVGGLVMSQLLTLYTTPVVYLFFDRLRLRFSRKPKQTVTE.

The next 12 helical transmembrane spans lie at 3–23 (FFAL…AITL), 333–353 (EVEQ…FLFL), 360–380 (IIPA…MYLC), 387–407 (LSLM…IVVL), 431–451 (VGFT…PLLL), 463–483 (FAVT…TLTP), 528–548 (LVGV…ISIP), 853–873 (VILI…LYES), 875–895 (VHPL…LLAL), 897–917 (LFNA…IGIV), 953–973 (PIMM…LSGG), and 984–1004 (ITIV…TPVV).

The protein belongs to the resistance-nodulation-cell division (RND) (TC 2.A.6) family. MdtC subfamily. As to quaternary structure, part of a tripartite efflux system composed of MdtA, MdtB and MdtC. MdtC forms a heteromultimer with MdtB.

It is found in the cell inner membrane. In terms of biological role, the MdtABC tripartite complex confers resistance against novobiocin and deoxycholate. This Escherichia coli O8 (strain IAI1) protein is Multidrug resistance protein MdtC.